The chain runs to 769 residues: Apoptotic enhancer 1 protein (769 aa).

Disordered stretches follow at residues 69 to 88, 265 to 396, and 451 to 518; these read PVRV…SQQY, SVEP…LDES, and PQLP…RSDD. Over residues 275–284 the composition is skewed to low complexity; the sequence is QQQQPSPQMM. A compositionally biased stretch (basic and acidic residues) spans 285-295; the sequence is KSEEFSEKRDL. The segment covering 339–353 has biased composition (low complexity); sequence STDPHSNHSSPSTSS. 3 stretches are compositionally biased toward polar residues: residues 354–378, 453–467, and 474–491; these read QKAP…TMTR, LPTS…TSET, and NSES…NNLE. ANK repeat units lie at residues 585-617 and 618-652; these read EGIT…AQDS and DGWT…TLSD. The SH3 domain occupies 684-746; sequence INTGKVYAAY…PRTYLALYPS (63 aa).

This sequence belongs to the iASPP family. As to quaternary structure, interacts with cep-1/p53; the interaction inhibits pro-apoptotic activity of cep-1.

It is found in the nucleus. Negetively regulates apoptosis via its interaction with cep-1. In Caenorhabditis elegans, this protein is Apoptotic enhancer 1 protein.